Consider the following 614-residue polypeptide: Two-component response regulator ORR33 (614 aa).

Residues 14–139 (RVMIIDDDAK…VMARLWRVVA (126 aa)) enclose the Response regulatory domain. Asp67 carries the post-translational modification 4-aspartylphosphate. The segment at 193 to 220 (RQLTINVVDDGNRGSGSGGGGGGGADAN) is disordered. Residues 205-217 (RGSGSGGGGGGGA) are compositionally biased toward gly residues.

It belongs to the ARR family. Type-B subfamily. In terms of processing, two-component system major event consists of a His-to-Asp phosphorelay between a sensor histidine kinase (HK) and a response regulator (RR). In plants, the His-to-Asp phosphorelay involves an additional intermediate named Histidine-containing phosphotransfer protein (HPt). This multistep phosphorelay consists of a His-Asp-His-Asp sequential transfer of a phosphate group between first a His and an Asp of the HK protein, followed by the transfer to a conserved His of the HPt protein and finally the transfer to an Asp in the receiver domain of the RR protein.

Functions as a response regulator involved in His-to-Asp phosphorelay signal transduction system. Phosphorylation of the Asp residue in the receiver domain activates the ability of the protein to promote the transcription of target genes. May directly activate some type-A response regulators in response to cytokinins. In Oryza sativa subsp. indica (Rice), this protein is Two-component response regulator ORR33.